Here is a 5209-residue protein sequence, read N- to C-terminus: E3 ubiquitin-protein ligase rnf213-alpha (5209 aa).

2 stretches are compositionally biased toward polar residues: residues 27–52 (SQSY…QITN) and 61–72 (ESKSLEIQNANV). Residues 27–373 (SQSYETTQGT…KRNTRSTQHI (347 aa)) are disordered. Residues 85 to 101 (PKKKKRKKRKKEKKKKS) show a composition bias toward basic residues. Low complexity predominate over residues 108-118 (SSLTSDLSDIS). Positions 119 to 128 (LTDKEKKMDT) are enriched in basic and acidic residues. 2 stretches are compositionally biased toward polar residues: residues 167-177 (LSASALTTGSS) and 184-195 (IGTTQKPVSASA). Over residues 205–218 (QTKEEKVKCKDEGQ) the composition is skewed to basic and acidic residues. Over residues 219 to 243 (KSLSAKAQHTPNANVDQNANVQSDA) the composition is skewed to polar residues. The span at 256-269 (KSSSVKTKPSKSTV) shows a compositional bias: low complexity. 2 stretches are compositionally biased toward basic and acidic residues: residues 271–288 (DPKK…RDNE) and 330–352 (MKVE…SKES). ATP contacts are provided by residues 2036–2041 (GVGKSL), E2135, D2193, R2252, K2535, and S2610. Residues C4005, C4008, C4020, H4022, C4025, C4028, C4040, C4043, C4507, and H4511 each contribute to the Zn(2+) site. Residues 4005–4043 (CPVCMGDPRDPLSLPCDHIYCLTCIRQWLVPGQMHCPLC) form an RING-type zinc finger. The RZ-type zinc-finger motif lies at 4487–4557 (MPDDMLAVAQ…MQIQADRTQS (71 aa)). C4518 functions as the Nucleophile; for E3 ubiquitin-lipopolysaccharide ligase activity in the catalytic mechanism. Positions 4527 and 4530 each coordinate Zn(2+).

The protein belongs to the AAA ATPase family.

The protein localises to the cytoplasm. It is found in the cytosol. Its subcellular location is the lipid droplet. It carries out the reaction S-ubiquitinyl-[E2 ubiquitin-conjugating enzyme]-L-cysteine + [acceptor protein]-L-lysine = [E2 ubiquitin-conjugating enzyme]-L-cysteine + N(6)-ubiquitinyl-[acceptor protein]-L-lysine.. It catalyses the reaction ATP + H2O = ADP + phosphate + H(+). The protein operates within protein modification; protein ubiquitination. Functionally, atypical E3 ubiquitin ligase that can catalyze ubiquitination of both proteins and lipids, and which is involved in various processes, such as lipid metabolism, angiogenesis and cell-autonomous immunity. Acts as a key immune sensor by catalyzing ubiquitination of the lipid A moiety of bacterial lipopolysaccharide (LPS) via its RZ-type zinc-finger: restricts the proliferation of cytosolic bacteria, such as Salmonella, by generating the bacterial ubiquitin coat through the ubiquitination of LPS. Ubiquitination of LPS triggers cell-autonomous immunity, such as antibacterial autophagy, leading to degradation of the microbial invader. Involved in lipid metabolism by regulating fat storage and lipid droplet formation; act by inhibiting the lipolytic process. Also regulates lipotoxicity by inhibiting desaturation of fatty acids. Also acts as an E3 ubiquitin-protein ligase via its RING-type zinc finger. Involved in the non-canonical Wnt signaling pathway in vascular development: acts by mediating ubiquitination and degradation of proteins downstream of rspo3, leading to inhibit the non-canonical Wnt signaling pathway and promoting vessel regression. Also has ATPase activity; ATPase activity is required for ubiquitination of LPS. Also involved in neuromuscular regulation. The sequence is that of E3 ubiquitin-protein ligase rnf213-alpha from Danio rerio (Zebrafish).